Here is a 568-residue protein sequence, read N- to C-terminus: 2-succinyl-5-enolpyruvyl-6-hydroxy-3-cyclohexene-1-carboxylate synthase (568 aa).

The protein belongs to the TPP enzyme family. MenD subfamily. Homodimer. Mg(2+) is required as a cofactor. Requires Mn(2+) as cofactor. The cofactor is thiamine diphosphate.

It catalyses the reaction isochorismate + 2-oxoglutarate + H(+) = 5-enolpyruvoyl-6-hydroxy-2-succinyl-cyclohex-3-ene-1-carboxylate + CO2. Its pathway is quinol/quinone metabolism; 1,4-dihydroxy-2-naphthoate biosynthesis; 1,4-dihydroxy-2-naphthoate from chorismate: step 2/7. It functions in the pathway quinol/quinone metabolism; menaquinone biosynthesis. In terms of biological role, catalyzes the thiamine diphosphate-dependent decarboxylation of 2-oxoglutarate and the subsequent addition of the resulting succinic semialdehyde-thiamine pyrophosphate anion to isochorismate to yield 2-succinyl-5-enolpyruvyl-6-hydroxy-3-cyclohexene-1-carboxylate (SEPHCHC). The polypeptide is 2-succinyl-5-enolpyruvyl-6-hydroxy-3-cyclohexene-1-carboxylate synthase (Actinobacillus succinogenes (strain ATCC 55618 / DSM 22257 / CCUG 43843 / 130Z)).